Consider the following 402-residue polypeptide: Envelope glycoprotein D (402 aa).

Positions 1–17 (MLLAALLAALVARTTLG) are cleaved as a signal peptide. Intrachain disulfides connect Cys66–Cys189, Cys105–Cys205, and Cys117–Cys126. Positions 238-316 (YRKNGRTLPR…RPTPRPPRPE (79 aa)) are profusion. The segment at 252–350 (ATPYAIDPAR…PRTPAAPGVS (99 aa)) is disordered. The segment covering 269 to 278 (PRPRPRPRPR) has biased composition (basic residues). The segment covering 282–292 (EPAPATPAPPD) has biased composition (pro residues). Positions 293-304 (RLPEPATRDHAA) are enriched in basic and acidic residues. A helical membrane pass occupies residues 356 to 376 (IVGTGTAMGALLVGVCVYIFF).

This sequence belongs to the herpesviridae glycoprotein D family. Not N-glycosylated.

Its subcellular location is the virion membrane. Functionally, envelope glycoprotein that binds to the host cell entry receptor NECTIN1, promoting the virus entry into host cells. In contrast, does not use host TNFRSF14 as receptor. May trigger fusion with host membrane, by recruiting the fusion machinery composed of gB and gH/gL. The polypeptide is Envelope glycoprotein D (Suid herpesvirus 1 (strain Rice) (SuHV-1)).